A 376-amino-acid chain; its full sequence is Putative glutamate--cysteine ligase 2-1 (376 aa).

The protein belongs to the glutamate--cysteine ligase type 2 family. YbdK subfamily.

The enzyme catalyses L-cysteine + L-glutamate + ATP = gamma-L-glutamyl-L-cysteine + ADP + phosphate + H(+). Its function is as follows. ATP-dependent carboxylate-amine ligase which exhibits weak glutamate--cysteine ligase activity. The polypeptide is Putative glutamate--cysteine ligase 2-1 (Mycolicibacterium smegmatis (strain ATCC 700084 / mc(2)155) (Mycobacterium smegmatis)).